We begin with the raw amino-acid sequence, 216 residues long: Co-chaperone protein SBA1 (216 aa).

Ser-2 is modified (N-acetylserine). The CS domain maps to 5–108 (VINPQVAWAQ…LESEYWPRLT (104 aa)). 2 consecutive repeats follow at residues 141-156 (AQGM…AGGA) and 160-174 (GGMD…AGGA). The interval 169-216 (GGAGGAGSPDMAQLQQLLAQSGGNLDMGDFKENDEEDEEEEIEPEVKA) is disordered. Residues 200–216 (ENDEEDEEEEIEPEVKA) are compositionally biased toward acidic residues.

It belongs to the p23/wos2 family. As to quaternary structure, interacts with HSP82.

Its function is as follows. Acts as a co-chaperone. This is Co-chaperone protein SBA1 (SBA1) from Saccharomyces cerevisiae (strain ATCC 204508 / S288c) (Baker's yeast).